The chain runs to 365 residues: DNA replication and repair protein RecF (365 aa).

30-37 provides a ligand contact to ATP; the sequence is GDNGEGKT.

This sequence belongs to the RecF family.

Its subcellular location is the cytoplasm. In terms of biological role, the RecF protein is involved in DNA metabolism; it is required for DNA replication and normal SOS inducibility. RecF binds preferentially to single-stranded, linear DNA. It also seems to bind ATP. This chain is DNA replication and repair protein RecF, found in Leptospira interrogans serogroup Icterohaemorrhagiae serovar copenhageni (strain Fiocruz L1-130).